The primary structure comprises 196 residues: Cell division protein SepF (196 aa).

The disordered stretch occupies residues 15–80 (VEDDEEFNEP…PKRSASTFSK (66 aa)). Residues 57–72 (PAQTTPKPQTQTAAPK) are compositionally biased toward low complexity.

Belongs to the SepF family. In terms of assembly, homodimer. Interacts with FtsZ.

The protein resides in the cytoplasm. In terms of biological role, cell division protein that is part of the divisome complex and is recruited early to the Z-ring. Probably stimulates Z-ring formation, perhaps through the cross-linking of FtsZ protofilaments. Its function overlaps with FtsA. The protein is Cell division protein SepF of Lactococcus lactis subsp. cremoris (strain MG1363).